A 750-amino-acid chain; its full sequence is Photosystem I P700 chlorophyll a apoprotein A1 (750 aa).

8 helical membrane passes run 70–93 (VFSA…FHGA), 156–179 (LYCT…FHYH), 195–219 (LNHH…HVSL), 291–309 (TAHH…GHMY), 346–369 (WHAQ…HHMY), 385–411 (LSLF…IFMV), 433–455 (AIIS…LYIH), and 531–549 (FLVH…LILL). 2 residues coordinate [4Fe-4S] cluster: C573 and C582. 2 consecutive transmembrane segments (helical) span residues 589-610 (HVFL…HFSW) and 664-686 (LSAY…MFLF). H675 contributes to the chlorophyll a' binding site. Chlorophyll a is bound by residues M683 and Y691. Position 692 (W692) interacts with phylloquinone. Residues 724–744 (AVGVTHYLLGGIATTWAFFLA) form a helical membrane-spanning segment.

It belongs to the PsaA/PsaB family. As to quaternary structure, the PsaA/B heterodimer binds the P700 chlorophyll special pair and subsequent electron acceptors. PSI consists of a core antenna complex that captures photons, and an electron transfer chain that converts photonic excitation into a charge separation. The eukaryotic PSI reaction center is composed of at least 11 subunits. P700 is a chlorophyll a/chlorophyll a' dimer, A0 is one or more chlorophyll a, A1 is one or both phylloquinones and FX is a shared 4Fe-4S iron-sulfur center. serves as cofactor.

The protein resides in the plastid. Its subcellular location is the chloroplast thylakoid membrane. It catalyses the reaction reduced [plastocyanin] + hnu + oxidized [2Fe-2S]-[ferredoxin] = oxidized [plastocyanin] + reduced [2Fe-2S]-[ferredoxin]. Its function is as follows. PsaA and PsaB bind P700, the primary electron donor of photosystem I (PSI), as well as the electron acceptors A0, A1 and FX. PSI is a plastocyanin-ferredoxin oxidoreductase, converting photonic excitation into a charge separation, which transfers an electron from the donor P700 chlorophyll pair to the spectroscopically characterized acceptors A0, A1, FX, FA and FB in turn. Oxidized P700 is reduced on the lumenal side of the thylakoid membrane by plastocyanin. This is Photosystem I P700 chlorophyll a apoprotein A1 from Helianthus annuus (Common sunflower).